A 363-amino-acid polypeptide reads, in one-letter code: Galactokinase (363 aa).

Residue 16–19 (EHTD) participates in substrate binding. Residues Ser-50 and 103-109 (GSGLSSS) contribute to the ATP site. Positions 109 and 141 each coordinate Mg(2+). Residue Asp-153 is the Proton acceptor of the active site. Tyr-205 contacts substrate.

The protein belongs to the GHMP kinase family. GalK subfamily.

It localises to the cytoplasm. The enzyme catalyses alpha-D-galactose + ATP = alpha-D-galactose 1-phosphate + ADP + H(+). It participates in carbohydrate metabolism; galactose metabolism. In terms of biological role, catalyzes the transfer of the gamma-phosphate of ATP to D-galactose to form alpha-D-galactose-1-phosphate (Gal-1-P). This Mycobacterium bovis (strain ATCC BAA-935 / AF2122/97) protein is Galactokinase.